Reading from the N-terminus, the 170-residue chain is Adenine phosphoribosyltransferase (170 aa).

It belongs to the purine/pyrimidine phosphoribosyltransferase family. As to quaternary structure, homodimer.

Its subcellular location is the cytoplasm. It carries out the reaction AMP + diphosphate = 5-phospho-alpha-D-ribose 1-diphosphate + adenine. The protein operates within purine metabolism; AMP biosynthesis via salvage pathway; AMP from adenine: step 1/1. In terms of biological role, catalyzes a salvage reaction resulting in the formation of AMP, that is energically less costly than de novo synthesis. The protein is Adenine phosphoribosyltransferase of Lactococcus lactis subsp. lactis (strain IL1403) (Streptococcus lactis).